The primary structure comprises 130 residues: Small ribosomal subunit protein uS9 (130 aa).

It belongs to the universal ribosomal protein uS9 family.

The sequence is that of Small ribosomal subunit protein uS9 from Hahella chejuensis (strain KCTC 2396).